A 236-amino-acid polypeptide reads, in one-letter code: Lectin alpha chain (236 aa).

The Mn(2+) site is built by Glu-8 and Asp-10. Ca(2+)-binding residues include Asp-10, Tyr-12, Asn-14, and Asp-19. Tyr-12 contributes to the a carbohydrate binding site. Residues Asp-19, His-24, and Ser-34 each contribute to the Mn(2+) site. Residue 99-100 (LY) participates in a carbohydrate binding. Asp-207 contributes to the Ca(2+) binding site. Arg-227 is a binding site for a carbohydrate.

Belongs to the leguminous lectin family. Equilibrium between homodimer and homotetramer. Oligomerization is pH-dependent with homotetramers forming at pH 6.5 and above. In terms of processing, the beta and gamma chains are produced by partial proteolytic processing of the lectin alpha chain by an asparaginyl endopeptidase. Mixture of 60% alpha lectin and 40% of its beta and gamma proteolytic fragments. Seed.

D-mannose/D-glucose-binding lectin. Has anti-inflammatory activity in rats. Induces histamine release in mast cells from rat. Induces lymphocyte proliferation and IFNG production. This is Lectin alpha chain from Cratylia argentea (Cratylia floribunda).